An 823-amino-acid chain; its full sequence is DNA ligase (823 aa).

NAD(+)-binding positions include 32–36 (DAEYD), 81–82 (SL), and E121. The active-site N6-AMP-lysine intermediate is K123. Residues R144, E181, K299, and K323 each coordinate NAD(+). The Zn(2+) site is built by C449, C452, C467, and C473. Residues 528–558 (ETADKGSSENENGDAETVSGDLSKYNTQNGK) are disordered. A BRCT domain is found at 746-823 (GINKAVAGKT…SEAELLTLLC (78 aa)).

Belongs to the NAD-dependent DNA ligase family. LigA subfamily. Mg(2+) serves as cofactor. Requires Mn(2+) as cofactor.

The catalysed reaction is NAD(+) + (deoxyribonucleotide)n-3'-hydroxyl + 5'-phospho-(deoxyribonucleotide)m = (deoxyribonucleotide)n+m + AMP + beta-nicotinamide D-nucleotide.. In terms of biological role, DNA ligase that catalyzes the formation of phosphodiester linkages between 5'-phosphoryl and 3'-hydroxyl groups in double-stranded DNA using NAD as a coenzyme and as the energy source for the reaction. It is essential for DNA replication and repair of damaged DNA. In Neisseria gonorrhoeae (strain NCCP11945), this protein is DNA ligase.